A 164-amino-acid chain; its full sequence is Transcription factor E (164 aa).

The 83-residue stretch at 5–87 folds into the HTH TFE/IIEalpha-type domain; that stretch reads NDKVIRGYLR…LWHLDFSDIE (83 aa).

The protein belongs to the TFE family. Monomer. Interaction with RNA polymerase subunits RpoF and RpoE is necessary for Tfe stimulatory transcription activity. Able to interact with Tbp and RNA polymerase in the absence of DNA promoter. Interacts both with the preinitiation and elongation complexes.

Transcription factor that plays a role in the activation of archaeal genes transcribed by RNA polymerase. Facilitates transcription initiation by enhancing TATA-box recognition by TATA-box-binding protein (Tbp), and transcription factor B (Tfb) and RNA polymerase recruitment. Not absolutely required for transcription in vitro, but particularly important in cases where Tbp or Tfb function is not optimal. It dynamically alters the nucleic acid-binding properties of RNA polymerases by stabilizing the initiation complex and destabilizing elongation complexes. Seems to translocate with the RNA polymerase following initiation and acts by binding to the non template strand of the transcription bubble in elongation complexes. This Methanosarcina mazei (strain ATCC BAA-159 / DSM 3647 / Goe1 / Go1 / JCM 11833 / OCM 88) (Methanosarcina frisia) protein is Transcription factor E.